We begin with the raw amino-acid sequence, 127 residues long: Small ribosomal subunit protein uS11 (127 aa).

The protein belongs to the universal ribosomal protein uS11 family. In terms of assembly, part of the 30S ribosomal subunit. Interacts with proteins S7 and S18. Binds to IF-3.

Its function is as follows. Located on the platform of the 30S subunit, it bridges several disparate RNA helices of the 16S rRNA. Forms part of the Shine-Dalgarno cleft in the 70S ribosome. This is Small ribosomal subunit protein uS11 from Chlorobium limicola (strain DSM 245 / NBRC 103803 / 6330).